Consider the following 172-residue polypeptide: ATP synthase subunit b (172 aa).

A helical transmembrane segment spans residues 5–24 (LLMLLLLGSVSLFANEAAAS).

It belongs to the ATPase B chain family. F-type ATPases have 2 components, F(1) - the catalytic core - and F(0) - the membrane proton channel. F(1) has five subunits: alpha(3), beta(3), gamma(1), delta(1), epsilon(1). F(0) has three main subunits: a(1), b(2) and c(10-14). The alpha and beta chains form an alternating ring which encloses part of the gamma chain. F(1) is attached to F(0) by a central stalk formed by the gamma and epsilon chains, while a peripheral stalk is formed by the delta and b chains.

It localises to the cell inner membrane. Functionally, f(1)F(0) ATP synthase produces ATP from ADP in the presence of a proton or sodium gradient. F-type ATPases consist of two structural domains, F(1) containing the extramembraneous catalytic core and F(0) containing the membrane proton channel, linked together by a central stalk and a peripheral stalk. During catalysis, ATP synthesis in the catalytic domain of F(1) is coupled via a rotary mechanism of the central stalk subunits to proton translocation. In terms of biological role, component of the F(0) channel, it forms part of the peripheral stalk, linking F(1) to F(0). The chain is ATP synthase subunit b from Nitratiruptor sp. (strain SB155-2).